Here is a 623-residue protein sequence, read N- to C-terminus: Low affinity potassium transport system protein Kup (623 aa).

12 helical membrane passes run 10–30, 47–67, 102–122, 138–158, 166–186, 214–234, 248–268, 277–297, 338–358, 364–384, 396–416, and 420–440; these read LSAV…TSPL, PDVV…IVSV, ILVI…VITP, PALD…LFVI, VGKL…LLGL, VSFF…ALYA, WFTV…ALLL, PFFL…ATLA, IYIP…IVGF, LAAA…VLFC, FFVY…FSAN, and LFSG…IMTT.

Belongs to the HAK/KUP transporter (TC 2.A.72) family.

The protein resides in the cell inner membrane. The catalysed reaction is K(+)(in) + H(+)(in) = K(+)(out) + H(+)(out). Responsible for the low-affinity transport of potassium into the cell. Likely operates as a K(+):H(+) symporter. This Yersinia enterocolitica serotype O:8 / biotype 1B (strain NCTC 13174 / 8081) protein is Low affinity potassium transport system protein Kup.